The chain runs to 576 residues: Deformed epidermal autoregulatory factor 1 (576 aa).

Disordered stretches follow at residues 52 to 76, 189 to 215, and 309 to 362; these read VTSS…GGGN, AGGA…NPST, and ESAS…SGSG. 2 stretches are compositionally biased toward gly residues: residues 61–76 and 191–207; these read GSGG…GGGN and GASG…GGSS. Residues 210–291 form the SAND domain; the sequence is SENPSTQHNE…QSLIDEGTLT (82 aa). The Nuclear localization signal signature appears at 324–340; the sequence is RKRNQTDLDMESGPKRK. Positions 345–362 are enriched in low complexity; sequence HSNNNNSNTNNNNTSGSG. 8 residues coordinate Zn(2+): Cys-521, Cys-524, Cys-532, Cys-535, Cys-541, Cys-545, His-553, and Cys-557. An MYND-type zinc finger spans residues 521-557; the sequence is CANCNREALAECSLCRKTPYCSEFCQRKDWNAHQVEC.

The protein resides in the nucleus. Its function is as follows. Transcription factor that binds the homeotic Deformed (Dfd) response element. High affinity binding sites contain at least 1 TTCG motif surrounded by additional TCG sequences. May be involved in the selective action of Dfd on these sites without binding directly to the Dfd protein. Requirement of DEAF1 activity may be a common feature of enhancers targeted by Dfd. The protein is Deformed epidermal autoregulatory factor 1 (Deaf1) of Drosophila melanogaster (Fruit fly).